We begin with the raw amino-acid sequence, 186 residues long: Ribosome-recycling factor (186 aa).

Belongs to the RRF family.

The protein localises to the cytoplasm. Responsible for the release of ribosomes from messenger RNA at the termination of protein biosynthesis. May increase the efficiency of translation by recycling ribosomes from one round of translation to another. This Bordetella parapertussis (strain 12822 / ATCC BAA-587 / NCTC 13253) protein is Ribosome-recycling factor.